The sequence spans 83 residues: Cytochrome b559 subunit alpha (83 aa).

Residues Ile-21 to Trp-35 form a helical membrane-spanning segment. His-23 serves as a coordination point for heme.

As to quaternary structure, heterodimer of an alpha subunit and a beta subunit. PSII is composed of 1 copy each of membrane proteins PsbA, PsbB, PsbC, PsbD, PsbE, PsbF, PsbH, PsbI, PsbJ, PsbK, PsbL, PsbM, PsbT, PsbX, PsbY, PsbZ, Psb30/Ycf12, at least 3 peripheral proteins of the oxygen-evolving complex and a large number of cofactors. It forms dimeric complexes. The cofactor is heme b.

It is found in the plastid. It localises to the chloroplast thylakoid membrane. This b-type cytochrome is tightly associated with the reaction center of photosystem II (PSII). PSII is a light-driven water:plastoquinone oxidoreductase that uses light energy to abstract electrons from H(2)O, generating O(2) and a proton gradient subsequently used for ATP formation. It consists of a core antenna complex that captures photons, and an electron transfer chain that converts photonic excitation into a charge separation. This Pisum sativum (Garden pea) protein is Cytochrome b559 subunit alpha.